A 264-amino-acid polypeptide reads, in one-letter code: SPRY domain-containing SOCS box protein 2 (264 aa).

Over residues 1 to 19 (MGQTALARGSSSTPTSQAL) the composition is skewed to polar residues. The disordered stretch occupies residues 1 to 34 (MGQTALARGSSSTPTSQALYSDFSPPEGLEELLS). The 196-residue stretch at 26 to 221 (PEGLEELLSA…VRIRYMGERR (196 aa)) folds into the B30.2/SPRY domain. The 43-residue stretch at 222–264 (VEEPQSLLHLSRLCVRHALGDTRLGQISTLPLPPAMKRYLLYK) folds into the SOCS box domain.

The protein belongs to the SPSB family. In terms of assembly, component of the probable ECS(SPSB2) E3 ubiquitin-protein ligase complex which contains CUL5, RNF7/RBX2, Elongin BC complex and SPSB2. Interacts with CUL5, RNF7, ELOB and ELOC. Interacts with MET. Interacts (via B30.2/SPRY domain) with PAWR; this interaction occurs in association with the Elongin BC complex. Interacts with NOS2.

It localises to the cytoplasm. The protein localises to the cytosol. It participates in protein modification; protein ubiquitination. In terms of biological role, substrate recognition component of a SCF-like ECS (Elongin BC-CUL2/5-SOCS-box protein) E3 ubiquitin-protein ligase complex which mediates the ubiquitination and subsequent proteasomal degradation of target proteins. Negatively regulates nitric oxide (NO) production and limits cellular toxicity in activated macrophages by mediating the ubiquitination and proteasomal degradation of NOS2. Acts as a bridge which links NOS2 with the ECS E3 ubiquitin ligase complex components ELOC and CUL5. The chain is SPRY domain-containing SOCS box protein 2 (Spsb2) from Mus musculus (Mouse).